Consider the following 438-residue polypeptide: Adenylosuccinate synthetase (438 aa).

GTP is bound by residues 13 to 19 and 41 to 43; these read GDEGKGK and GHT. The active-site Proton acceptor is aspartate 14. The Mg(2+) site is built by aspartate 14 and glycine 41. Residues 14–17, 39–42, threonine 130, arginine 144, glutamine 225, threonine 240, and arginine 312 contribute to the IMP site; these read DEGK and NAGH. Histidine 42 acts as the Proton donor in catalysis. 308-314 contributes to the substrate binding site; sequence ATTGRQR. GTP-binding positions include arginine 314, 340–342, and 422–424; these read KLD and STG.

Belongs to the adenylosuccinate synthetase family. In terms of assembly, homodimer. The cofactor is Mg(2+).

The protein resides in the cytoplasm. It catalyses the reaction IMP + L-aspartate + GTP = N(6)-(1,2-dicarboxyethyl)-AMP + GDP + phosphate + 2 H(+). It participates in purine metabolism; AMP biosynthesis via de novo pathway; AMP from IMP: step 1/2. Its function is as follows. Plays an important role in the de novo pathway of purine nucleotide biosynthesis. Catalyzes the first committed step in the biosynthesis of AMP from IMP. This chain is Adenylosuccinate synthetase, found in Vesicomyosocius okutanii subsp. Calyptogena okutanii (strain HA).